The following is an 87-amino-acid chain: Large ribosomal subunit protein bL31B (87 aa).

It belongs to the bacterial ribosomal protein bL31 family. Type B subfamily. Part of the 50S ribosomal subunit.

The polypeptide is Large ribosomal subunit protein bL31B (Corynebacterium kroppenstedtii (strain DSM 44385 / JCM 11950 / CIP 105744 / CCUG 35717)).